A 359-amino-acid polypeptide reads, in one-letter code: MQLDTISFNNPLNSETSEDTTKLPFTLGDLKAAIPAECFQPNVTKSLFYFFRDILIIGLLYAVASYLDSWLFFPIFWLMQGTMFWALFVVGHDCGHQSFSKQKWLNDLIGHLSHTPILVPYHGWRISHRTHHKNTGNIDNDESWYPVTESQYKDMPLAQKIGRYYVFLLAYPVYLFKRSPNKEGSHFLPSSSLFKPSEKWDVLTSTVLLIGMVGLLGFLTYQWGWMWLLKYYAVPYLVFIVWLDLVTFLHHTEPELPWYRGEDWTFLKGAISSIDRDYGLVYHIHHDIGTHVAHHIFLNIPHYNLLKATEAIKPVMGEYFHKSEEPIWKSLWNSCISCHFVPDTGSKVYYTSKNKSAKA.

Polar residues predominate over residues 1-15 (MQLDTISFNNPLNSE). Residues 1 to 20 (MQLDTISFNNPLNSETSEDT) form a disordered region. Helical transmembrane passes span 47–67 (LFYF…ASYL) and 70–90 (WLFF…LFVV). The Histidine box-1 motif lies at 92–96 (HDCGH). The Histidine box-2 motif lies at 128-132 (HRTHH). Helical transmembrane passes span 207-227 (VLLI…GWMW) and 228-248 (LLKY…LVTF). The Histidine box-3 signature appears at 294–298 (HHIFL).

It belongs to the fatty acid desaturase type 2 family. Fe(2+) is required as a cofactor.

Its subcellular location is the membrane. It catalyses the reaction a 1-[(9Z,12Z)-octadecdienoyl]-2-acyl-glycerolipid + 2 reduced [2Fe-2S]-[ferredoxin] + O2 + 2 H(+) = a 1-[(9Z,12Z,15Z)-octadectrienoyl]-2-acyl-glycerolipid + 2 oxidized [2Fe-2S]-[ferredoxin] + 2 H2O. The enzyme catalyses a 1-[(6Z,9Z,12Z)-octadectrienoyl]-2-acyl-glycerolipid + 2 reduced [2Fe-2S]-[ferredoxin] + O2 + 2 H(+) = a 1-[(6Z,9Z,12Z,15Z)-octadectetraenoyl]-2-acyl-glycerolipid + 2 oxidized [2Fe-2S]-[ferredoxin] + 2 H2O. It functions in the pathway lipid metabolism; polyunsaturated fatty acid biosynthesis. In terms of biological role, desaturase involved in fatty acid biosynthesis. Introduces a double bond at carbon 15 of linoleoyl and gamma-linolenoyl groups attached to the sn-1 position of the glycerol moiety of membrane glycerolipids. This chain is sn-1 acyl-lipid omega-3 desaturase (ferredoxin), found in Nostoc sp. (strain 36).